A 66-amino-acid polypeptide reads, in one-letter code: Potassium channel toxin alpha-KTx 30.3 (66 aa).

An N-terminal signal peptide occupies residues 1 to 24 (MNKTFFLVVIMATVLVLAFDATDA). Intrachain disulfides connect C30-C50, C36-C55, and C40-C57.

It belongs to the short scorpion toxin superfamily. Potassium channel inhibitor family. Alpha-KTx 30 subfamily. Expressed by the venom gland.

The protein localises to the secreted. Inhibits Kv1.3/KCNA3 channel. The sequence is that of Potassium channel toxin alpha-KTx 30.3 from Scorpiops jendeki (Scorpion).